Consider the following 434-residue polypeptide: Pectate lyase (434 aa).

A signal peptide spans 1–22 (MKAAQFFLYSLLFFASAALSSA). N-linked (GlcNAc...) asparagine glycans are attached at residues Asn68 and Asn97. Positions 232, 256, and 260 each coordinate Ca(2+). The active site involves Arg312.

The protein belongs to the polysaccharide lyase 1 family. Requires Ca(2+) as cofactor.

It carries out the reaction Eliminative cleavage of (1-&gt;4)-alpha-D-galacturonan to give oligosaccharides with 4-deoxy-alpha-D-galact-4-enuronosyl groups at their non-reducing ends.. It participates in glycan metabolism; pectin degradation; 2-dehydro-3-deoxy-D-gluconate from pectin: step 2/5. In Lilium longiflorum (Trumpet lily), this protein is Pectate lyase.